Consider the following 537-residue polypeptide: MAGQKQELPVSGEPLAVESPMTNKKKKKSKKNKHTEENHEVEEVPQEVTNGVEEELSNKEKKKKRKREEKESEKNKKKDVPEKKLEAEDLGEGESEQQKVVVTGKGVEEAKYAALKTFAESNLPENVLDCCKTFEKPSPIQSHTWPFLLDGRDLIGIAKTGSGKTLAFGIPAIMHVLKKNKKIGGGSKKVNPTCLVLSPTRELAVQISDVLREAGEPCGLKSICVYGGSSKGPQISAIRSGVDIVIGTPGRLRDLIESNVLRLSDVSFVVLDEADRMLDMGFEEPVRFILSNTNKVRQMVMFSATWPLDVHKLAQEFMDPNPIKVIIGSVDLAANHDVMQIIEVLDERARDQRLIALLEKYHKSQKNRVLVFALYKVEAERLERFLQQRGWKAVSIHGNKAQSERTRSLSLFKEGSCPLLVATDVAARGLDIPDVEVVINYTFPLTTEDYVHRIGRTGRAGKKGVAHTFFTPLNKGLAGELVNVLREAGQVVPADLLKFGTHVKKKESKLYGAHFKEIAADAPKATKITFDNSDDED.

The interval 1 to 97 is disordered; the sequence is MAGQKQELPV…EDLGEGESEQ (97 aa). The stretch at 22-80 forms a coiled coil; the sequence is TNKKKKKSKKNKHTEENHEVEEVPQEVTNGVEEELSNKEKKKKRKREEKESEKNKKKDV. Over residues 23–33 the composition is skewed to basic residues; sequence NKKKKKSKKNK. The segment covering 68–87 has biased composition (basic and acidic residues); it reads EEKESEKNKKKDVPEKKLEA. The Q motif signature appears at 116 to 142; it reads KTFAESNLPENVLDCCKTFEKPSPIQS. The 180-residue stretch at 145 to 324 folds into the Helicase ATP-binding domain; it reads WPFLLDGRDL…QEFMDPNPIK (180 aa). 158–165 serves as a coordination point for ATP; it reads AKTGSGKT. Residues 272-275 carry the DEAD box motif; that stretch reads DEAD. Residues 349–500 enclose the Helicase C-terminal domain; that stretch reads ARDQRLIALL…VVPADLLKFG (152 aa). S533 carries the phosphoserine modification.

Belongs to the DEAD box helicase family. DDX5/DBP2 subfamily.

The protein resides in the nucleus. It is found in the nucleolus. It carries out the reaction ATP + H2O = ADP + phosphate + H(+). In terms of biological role, ATP-dependent RNA helicase required for 60S ribosomal subunit synthesis. Involved in efficient pre-rRNA processing, predominantly at site A3, which is necessary for the normal formation of 25S and 5.8S rRNAs. The protein is DEAD-box ATP-dependent RNA helicase 5 (RH5) of Arabidopsis thaliana (Mouse-ear cress).